A 163-amino-acid chain; its full sequence is UPF0262 protein RPA4530 (163 aa).

This sequence belongs to the UPF0262 family.

The protein is UPF0262 protein RPA4530 of Rhodopseudomonas palustris (strain ATCC BAA-98 / CGA009).